A 178-amino-acid polypeptide reads, in one-letter code: Inner membrane-spanning protein YciB (178 aa).

A run of 5 helical transmembrane segments spans residues Ile-10–Met-30, Leu-47–Ala-67, Trp-76–Leu-96, Trp-121–Trp-141, and Leu-151–His-171.

It belongs to the YciB family.

Its subcellular location is the cell inner membrane. Its function is as follows. Plays a role in cell envelope biogenesis, maintenance of cell envelope integrity and membrane homeostasis. The polypeptide is Inner membrane-spanning protein YciB (Verminephrobacter eiseniae (strain EF01-2)).